A 401-amino-acid polypeptide reads, in one-letter code: Chaperone protein DnaJ (401 aa).

Residues D4 to G69 form the J domain. A CR-type zinc finger spans residues G156 to D237. Zn(2+) is bound by residues C169, C172, C185, C188, C211, C214, C225, and C228. CXXCXGXG motif repeat units follow at residues C169 to G176, C185 to G192, C211 to G218, and C225 to G232. A disordered region spans residues A377–S401. Residues N385–S401 show a composition bias toward basic and acidic residues.

The protein belongs to the DnaJ family. Homodimer. It depends on Zn(2+) as a cofactor.

Its subcellular location is the cytoplasm. In terms of biological role, participates actively in the response to hyperosmotic and heat shock by preventing the aggregation of stress-denatured proteins and by disaggregating proteins, also in an autonomous, DnaK-independent fashion. Unfolded proteins bind initially to DnaJ; upon interaction with the DnaJ-bound protein, DnaK hydrolyzes its bound ATP, resulting in the formation of a stable complex. GrpE releases ADP from DnaK; ATP binding to DnaK triggers the release of the substrate protein, thus completing the reaction cycle. Several rounds of ATP-dependent interactions between DnaJ, DnaK and GrpE are required for fully efficient folding. Also involved, together with DnaK and GrpE, in the DNA replication of plasmids through activation of initiation proteins. This chain is Chaperone protein DnaJ, found in Chlorobium limicola (strain DSM 245 / NBRC 103803 / 6330).